The chain runs to 282 residues: Pantothenate synthetase (282 aa).

30–37 (MGALHAGH) contacts ATP. Histidine 37 (proton donor) is an active-site residue. Glutamine 61 lines the (R)-pantoate pocket. Glutamine 61 contributes to the beta-alanine binding site. 147–150 (GEKD) contacts ATP. (R)-pantoate is bound at residue glutamine 153. ATP-binding positions include valine 177 and 185 to 188 (LSSR).

Belongs to the pantothenate synthetase family. As to quaternary structure, homodimer.

The protein localises to the cytoplasm. It carries out the reaction (R)-pantoate + beta-alanine + ATP = (R)-pantothenate + AMP + diphosphate + H(+). The protein operates within cofactor biosynthesis; (R)-pantothenate biosynthesis; (R)-pantothenate from (R)-pantoate and beta-alanine: step 1/1. Catalyzes the condensation of pantoate with beta-alanine in an ATP-dependent reaction via a pantoyl-adenylate intermediate. The sequence is that of Pantothenate synthetase from Phocaeicola vulgatus (strain ATCC 8482 / DSM 1447 / JCM 5826 / CCUG 4940 / NBRC 14291 / NCTC 11154) (Bacteroides vulgatus).